A 381-amino-acid polypeptide reads, in one-letter code: Probable tRNA sulfurtransferase (381 aa).

One can recognise a THUMP domain in the interval 68-176; the sequence is DLALKLLKKV…NDGAYIFTEK (109 aa). ATP contacts are provided by residues 194-195, Lys-276, Gly-298, and Gln-307; that span reads LI.

It belongs to the ThiI family.

The protein localises to the cytoplasm. It carries out the reaction [ThiI sulfur-carrier protein]-S-sulfanyl-L-cysteine + a uridine in tRNA + 2 reduced [2Fe-2S]-[ferredoxin] + ATP + H(+) = [ThiI sulfur-carrier protein]-L-cysteine + a 4-thiouridine in tRNA + 2 oxidized [2Fe-2S]-[ferredoxin] + AMP + diphosphate. The enzyme catalyses [ThiS sulfur-carrier protein]-C-terminal Gly-Gly-AMP + S-sulfanyl-L-cysteinyl-[cysteine desulfurase] + AH2 = [ThiS sulfur-carrier protein]-C-terminal-Gly-aminoethanethioate + L-cysteinyl-[cysteine desulfurase] + A + AMP + 2 H(+). It functions in the pathway cofactor biosynthesis; thiamine diphosphate biosynthesis. Its function is as follows. Catalyzes the ATP-dependent transfer of a sulfur to tRNA to produce 4-thiouridine in position 8 of tRNAs, which functions as a near-UV photosensor. Also catalyzes the transfer of sulfur to the sulfur carrier protein ThiS, forming ThiS-thiocarboxylate. This is a step in the synthesis of thiazole, in the thiamine biosynthesis pathway. The sulfur is donated as persulfide by IscS. The sequence is that of Probable tRNA sulfurtransferase from Methanocaldococcus jannaschii (strain ATCC 43067 / DSM 2661 / JAL-1 / JCM 10045 / NBRC 100440) (Methanococcus jannaschii).